A 224-amino-acid polypeptide reads, in one-letter code: Jacalin-related lectin 24 (224 aa).

Positions 8 to 160 (MFKVGPIGSK…LTSIGIYVYP (153 aa)) constitute a Jacalin-type lectin domain.

It belongs to the jacalin lectin family.

In Arabidopsis thaliana (Mouse-ear cress), this protein is Jacalin-related lectin 24 (JAL24).